The chain runs to 56 residues: uncharacterized protein (56 aa).

4Fe-4S ferredoxin-type domains follow at residues 2–28 and 29–56; these read VKID…NLIE and HIIV…LEGE. C9, C12, C15, C19, C38, C41, C44, and C48 together coordinate [4Fe-4S] cluster.

[4Fe-4S] cluster is required as a cofactor.

Functionally, ferredoxins are iron-sulfur proteins that transfer electrons in a wide variety of metabolic reactions. This is an uncharacterized protein from Methanocaldococcus jannaschii (strain ATCC 43067 / DSM 2661 / JAL-1 / JCM 10045 / NBRC 100440) (Methanococcus jannaschii).